Here is a 341-residue protein sequence, read N- to C-terminus: Guanine nucleotide-binding protein subunit beta (341 aa).

7 WD repeats span residues 54–84 (GHLA…IVWD), 96–126 (LRSS…SIYS), 142–171 (GHTG…ALWD), 183–213 (GHTG…KLWD), 225–255 (GHES…RLFD), 269–299 (NIIC…NVWD), and 311–341 (GHDN…KIWN).

The protein belongs to the WD repeat G protein beta family. In terms of assembly, g proteins are composed of 3 units, alpha, beta and gamma.

Its function is as follows. Guanine nucleotide-binding proteins (G proteins) are involved as a modulator or transducer in various transmembrane signaling systems. The beta and gamma chains are required for the GTPase activity, for replacement of GDP by GTP, and for G protein-effector interaction. The chain is Guanine nucleotide-binding protein subunit beta from Lymnaea stagnalis (Great pond snail).